We begin with the raw amino-acid sequence, 909 residues long: Protein translocase subunit SecA (909 aa).

ATP contacts are provided by residues Gln-87, Gly-105–Thr-109, and Asp-507. 2 disordered regions span residues Arg-567–Ser-586 and Tyr-859–Asp-909. Basic and acidic residues predominate over residues Glu-865–Arg-889. Positions 893, 895, 904, and 905 each coordinate Zn(2+). Basic residues predominate over residues Arg-899 to Asp-909.

Belongs to the SecA family. In terms of assembly, monomer and homodimer. Part of the essential Sec protein translocation apparatus which comprises SecA, SecYEG and auxiliary proteins SecDF-YajC and YidC. Zn(2+) serves as cofactor.

It is found in the cell inner membrane. The protein resides in the cytoplasm. The enzyme catalyses ATP + H2O + cellular proteinSide 1 = ADP + phosphate + cellular proteinSide 2.. Functionally, part of the Sec protein translocase complex. Interacts with the SecYEG preprotein conducting channel. Has a central role in coupling the hydrolysis of ATP to the transfer of proteins into and across the cell membrane, serving both as a receptor for the preprotein-SecB complex and as an ATP-driven molecular motor driving the stepwise translocation of polypeptide chains across the membrane. The protein is Protein translocase subunit SecA of Nitrosomonas eutropha (strain DSM 101675 / C91 / Nm57).